The primary structure comprises 159 residues: MTHLFTHINQDGKANMVDVTDKNTTQRQAIAQAYVEMKAETLALILNGQHHKGDVFATARIAGIMAAKKTSDIIPLCHPLALTKVEVELVAEPEFNRVRIQSLCKLSGKTGVEMEALTAASVAALTIYDMCKAIQKDMVITQVKLLEKTGGKSGHFTSQ.

Substrate is bound by residues 76–78 and 114–115; these read LCH and ME. Asp-129 is an active-site residue.

Belongs to the MoaC family. Homohexamer; trimer of dimers.

It carries out the reaction (8S)-3',8-cyclo-7,8-dihydroguanosine 5'-triphosphate = cyclic pyranopterin phosphate + diphosphate. The protein operates within cofactor biosynthesis; molybdopterin biosynthesis. In terms of biological role, catalyzes the conversion of (8S)-3',8-cyclo-7,8-dihydroguanosine 5'-triphosphate to cyclic pyranopterin monophosphate (cPMP). In Psychromonas ingrahamii (strain DSM 17664 / CCUG 51855 / 37), this protein is Cyclic pyranopterin monophosphate synthase.